The following is a 558-amino-acid chain: Factor VII-activating protease (558 aa).

Residues 1–23 (MFARMSDLHVLLLMVLAGKTAFG) form the signal peptide. Asparagine 54 carries an N-linked (GlcNAc...) asparagine glycan. EGF-like domains are found at residues 71-107 (EDDPCLSNPCTHGGDCLVSGATFTCRCPDPFSGNRCQ), 109-146 (VQNKCKNNPCGRGDCLITQSPPYHRCACKHPYRGSDCS), and 148-186 (VVPVCRPNPCQNGGTCSRQRRRSKFTCACPDQFKGKLCE). 18 disulfide bridges follow: cysteine 75–cysteine 86, cysteine 80–cysteine 95, cysteine 97–cysteine 106, cysteine 113–cysteine 123, cysteine 118–cysteine 134, cysteine 136–cysteine 145, cysteine 152–cysteine 163, cysteine 157–cysteine 174, cysteine 176–cysteine 185, cysteine 192–cysteine 274, cysteine 213–cysteine 255, cysteine 244–cysteine 269, cysteine 299–cysteine 433, cysteine 345–cysteine 361, cysteine 353–cysteine 422, cysteine 445–cysteine 513, cysteine 475–cysteine 491, and cysteine 503–cysteine 531. In terms of domain architecture, Kringle spans 191–274 (DCYVDDGYSY…KWEYCDVPAC (84 aa)). The Peptidase S1 domain maps to 312 to 553 (IFGGFKSTAG…FLTWIKATME (242 aa)). Active-site charge relay system residues include histidine 360 and aspartate 409. Serine 507 acts as the Charge relay system in catalysis.

This sequence belongs to the peptidase S1 family. In terms of assembly, heterodimer; disulfide-linked. Heterodimer of a 50 kDa heavy and a 27 kDa light chain linked by a disulfide bond. Post-translationally, proteolytic cleavage at Gly-23 or Leu-27 can give rise to the 50 kDa heavy chain (HC) and cleavage at Arg-311 or Lys-317 can give rise to the 27 kDa light chain (LC). The HC can undergo further proteolytic cleavage giving rise to a 26 kDa fragment. The LC can undergo further proteolytic cleavage at Arg-311 leading to a 17-kDa fragment and at Arg-478 leading to a 8-kDa fragment.

The protein localises to the secreted. Cleaves the alpha-chain at multiple sites and the beta-chain between 'Lys-53' and 'Lys-54' but not the gamma-chain of fibrinogen and therefore does not initiate the formation of the fibrin clot and does not cause the fibrinolysis directly. It does not cleave (activate) prothrombin and plasminogen but converts the inactive single chain urinary plasminogen activator (pro-urokinase) to the active two chain form. Activates coagulation factor VII. May function as a tumor suppressor negatively regulating cell proliferation and cell migration. This Bos taurus (Bovine) protein is Factor VII-activating protease (HABP2).